A 172-amino-acid chain; its full sequence is METPETRFCKESKVVKTSRVFPLDTNNHNTLFGGKLMSYIDDIASISAARHCRRETVTASMDSVDFLKPIGQKDSVCLESYVTWVGTSSMEVFVKVIKEHLMTGERELAATSFLTFVALDSNGKPVPVPRVVPETEEEIMLHNTAVQRANERKNRKRHSQALANALGTDKPW.

In terms of domain architecture, HotDog ACOT-type spans 10–122 (KESKVVKTSR…FLTFVALDSN (113 aa)). The segment at 148-172 (RANERKNRKRHSQALANALGTDKPW) is disordered.

The protein belongs to the acyl coenzyme A hydrolase family.

This is an uncharacterized protein from Bacillus subtilis (strain 168).